The primary structure comprises 381 residues: Cytochrome b (381 aa).

Transmembrane regions (helical) follow at residues 34–54 (FGSL…FLAM), 78–99 (WLIR…YLHI), 114–134 (WNIG…GYVL), and 179–199 (FFAF…IHLL). Residues H84 and H98 each coordinate heme b. The heme b site is built by H183 and H197. Residue H202 participates in a ubiquinone binding. A run of 4 helical transmembrane segments spans residues 227–247 (YKDL…ALFM), 289–309 (LGGV…PLLH), 321–341 (LTQI…WIGG), and 348–368 (FITV…IIMP).

It belongs to the cytochrome b family. As to quaternary structure, the cytochrome bc1 complex contains 3 respiratory subunits (MT-CYB, CYC1 and UQCRFS1), 2 core proteins (UQCRC1 and UQCRC2) and probably 6 low-molecular weight proteins. Heme b is required as a cofactor.

It localises to the mitochondrion inner membrane. Its function is as follows. Component of the ubiquinol-cytochrome c reductase complex (complex III or cytochrome b-c1 complex) that is part of the mitochondrial respiratory chain. The b-c1 complex mediates electron transfer from ubiquinol to cytochrome c. Contributes to the generation of a proton gradient across the mitochondrial membrane that is then used for ATP synthesis. This is Cytochrome b (mt-cyb) from Sphyrna tiburo vespertina (Pacific bonnethead shark).